A 250-amino-acid polypeptide reads, in one-letter code: Phosphatidylglycerol--prolipoprotein diacylglyceryl transferase (250 aa).

4 helical membrane passes run 11-31 (LAIRWYGVIISIGAALGLLLA), 49-69 (FLIAFPSAIIGARLYYVIFEF), 84-104 (QGGLAIHGGIIFGVLAVYIYL), and 109-129 (ESFFEYVDVAAPSIILGQAIG). Residue Arg130 participates in a 1,2-diacyl-sn-glycero-3-phospho-(1'-sn-glycerol) binding. 3 helical membrane passes run 169–189 (PTFLYESIWNFIVCIFLVYLL), 196–216 (GIVFMAYIGLYSLGRFFIEGL), and 228–248 (VAQLISVLGIILSIFFIYNII).

It belongs to the Lgt family.

It localises to the cell membrane. It catalyses the reaction L-cysteinyl-[prolipoprotein] + a 1,2-diacyl-sn-glycero-3-phospho-(1'-sn-glycerol) = an S-1,2-diacyl-sn-glyceryl-L-cysteinyl-[prolipoprotein] + sn-glycerol 1-phosphate + H(+). The protein operates within protein modification; lipoprotein biosynthesis (diacylglyceryl transfer). Its function is as follows. Catalyzes the transfer of the diacylglyceryl group from phosphatidylglycerol to the sulfhydryl group of the N-terminal cysteine of a prolipoprotein, the first step in the formation of mature lipoproteins. This Clostridium botulinum (strain 657 / Type Ba4) protein is Phosphatidylglycerol--prolipoprotein diacylglyceryl transferase.